The following is a 256-amino-acid chain: tRNA-cytidine(32) 2-sulfurtransferase (256 aa).

A PP-loop motif motif is present at residues 35 to 40 (SGGKDS). Residues C110, C113, and C201 each contribute to the [4Fe-4S] cluster site.

The protein belongs to the TtcA family. As to quaternary structure, homodimer. Requires Mg(2+) as cofactor. It depends on [4Fe-4S] cluster as a cofactor.

Its subcellular location is the cytoplasm. The catalysed reaction is cytidine(32) in tRNA + S-sulfanyl-L-cysteinyl-[cysteine desulfurase] + AH2 + ATP = 2-thiocytidine(32) in tRNA + L-cysteinyl-[cysteine desulfurase] + A + AMP + diphosphate + H(+). It participates in tRNA modification. In terms of biological role, catalyzes the ATP-dependent 2-thiolation of cytidine in position 32 of tRNA, to form 2-thiocytidine (s(2)C32). The sulfur atoms are provided by the cysteine/cysteine desulfurase (IscS) system. The polypeptide is tRNA-cytidine(32) 2-sulfurtransferase (Coxiella burnetii (strain CbuG_Q212) (Coxiella burnetii (strain Q212))).